Reading from the N-terminus, the 513-residue chain is ATP synthase subunit alpha 1 (513 aa).

169 to 176 (GDRQTGKT) is a binding site for ATP.

It belongs to the ATPase alpha/beta chains family. As to quaternary structure, F-type ATPases have 2 components, CF(1) - the catalytic core - and CF(0) - the membrane proton channel. CF(1) has five subunits: alpha(3), beta(3), gamma(1), delta(1), epsilon(1). CF(0) has three main subunits: a(1), b(2) and c(9-12). The alpha and beta chains form an alternating ring which encloses part of the gamma chain. CF(1) is attached to CF(0) by a central stalk formed by the gamma and epsilon chains, while a peripheral stalk is formed by the delta and b chains.

The protein resides in the cell inner membrane. It catalyses the reaction ATP + H2O + 4 H(+)(in) = ADP + phosphate + 5 H(+)(out). In terms of biological role, produces ATP from ADP in the presence of a proton gradient across the membrane. The alpha chain is a regulatory subunit. The sequence is that of ATP synthase subunit alpha 1 from Photobacterium profundum (strain SS9).